The sequence spans 123 residues: Large ribosomal subunit protein uL29 (123 aa).

Belongs to the universal ribosomal protein uL29 family. Component of the large ribosomal subunit.

It localises to the cytoplasm. Functionally, component of the large ribosomal subunit. The ribosome is a large ribonucleoprotein complex responsible for the synthesis of proteins in the cell. This chain is Large ribosomal subunit protein uL29 (rpl35), found in Hippocampus comes (Tiger tail seahorse).